A 133-amino-acid polypeptide reads, in one-letter code: UPF0225 protein BPP1723 (133 aa).

This sequence belongs to the UPF0225 family.

In Bordetella parapertussis (strain 12822 / ATCC BAA-587 / NCTC 13253), this protein is UPF0225 protein BPP1723.